Here is a 306-residue protein sequence, read N- to C-terminus: 26S proteasome regulatory subunit RPN11 (306 aa).

Residues 27 to 162 (VYISSIALLK…IDAFRLIDTG (136 aa)) enclose the MPN domain. The Zn(2+) site is built by H109, H111, and D122. Residues 109-122 (HSHPGFGCWLSSVD) carry the JAMM motif motif.

The protein belongs to the peptidase M67A family.

Its function is as follows. Acts as a regulatory subunit of the 26 proteasome which is involved in the ATP-dependent degradation of ubiquitinated proteins. The polypeptide is 26S proteasome regulatory subunit RPN11 (RPN11) (Candida glabrata (strain ATCC 2001 / BCRC 20586 / JCM 3761 / NBRC 0622 / NRRL Y-65 / CBS 138) (Yeast)).